The primary structure comprises 539 residues: Acrosin-binding protein (539 aa).

Residues 1-25 (MRQLAAGSLLSLLKVLLLPLAPAPA) form the signal peptide. The segment at 26–106 (QDANSASTPG…ASWFESFCQF (81 aa)) is pro-ACR binding. Positions 26–269 (QDANSASTPG…NPFSFTPRVR (244 aa)) are cleaved as a propeptide — removed in active form. The tract at residues 186–259 (LGGQEQGQEH…PKFQSEFVSS (74 aa)) is disordered. The segment covering 192–211 (GQEHKQEHKQEQGQEHKQDE) has biased composition (basic and acidic residues). Acidic residues predominate over residues 212 to 238 (GQEQEEQEEEQEEEGKQEEGQGTEESL). The pro-ACR binding stretch occupies residues 315–423 (LPHVDALLVL…TQIGTLKSGR (109 aa)).

Binds specifically to the 55- and 53-kDa proacrosins and the 49-kDa acrosin intermediate, but is not capable of binding 43-kDa acrosin intermediate and 32-kDa mature acrosin. In terms of processing, the N-terminus is blocked. Synthesized as a 60-kDa precursor, the 35-kDa mature form is post-translationally produced by the removal of the N-terminal half of the precursor during sperm maturation in the testis and/or epididymis. Post-translationally, phosphorylated on Tyr residues in capacitated sperm. As to expression, specifically expressed in testis.

It is found in the secreted. The protein localises to the cytoplasmic vesicle. It localises to the secretory vesicle. The protein resides in the acrosome. In terms of biological role, acrosomal protein that maintains proacrosin (pro-ACR) as an enzymatically inactive zymogen in the acrosome. Involved also in the acrosome formation. This Sus scrofa (Pig) protein is Acrosin-binding protein.